We begin with the raw amino-acid sequence, 313 residues long: Foldase protein PrsA (313 aa).

Positions 1 to 20 (MKKKLLAGAITLLSVATLAA) are cleaved as a signal peptide. Cys21 is lipidated: N-palmitoyl cysteine. Residue Cys21 is the site of S-diacylglycerol cysteine attachment. In terms of domain architecture, PpiC spans 143–241 (TPDVTAQIIR…SQYYIVKLTK (99 aa)).

This sequence belongs to the PrsA family.

It is found in the cell membrane. It carries out the reaction [protein]-peptidylproline (omega=180) = [protein]-peptidylproline (omega=0). Plays a major role in protein secretion by helping the post-translocational extracellular folding of several secreted proteins. The protein is Foldase protein PrsA of Streptococcus pneumoniae (strain ATCC BAA-255 / R6).